The chain runs to 192 residues: Putative metal-sulfur cluster biosynthesis proteins YuaD (192 aa).

Residues 15–179 (ADTKSFVTKQ…VYTGDEIEVH (165 aa)) form the MOSC domain.

The protein is Putative metal-sulfur cluster biosynthesis proteins YuaD (yuaD) of Bacillus subtilis (strain 168).